We begin with the raw amino-acid sequence, 274 residues long: Eukaryotic translation initiation factor 3 subunit G (274 aa).

Phosphoserine is present on residues Ser146, Ser164, and Ser171. The interval Ala149 to Pro170 is disordered. One can recognise an RRM domain in the interval Thr191–Lys270.

It belongs to the eIF-3 subunit G family. As to quaternary structure, component of the eukaryotic translation initiation factor 3 (eIF-3) complex.

It localises to the cytoplasm. Functionally, RNA-binding component of the eukaryotic translation initiation factor 3 (eIF-3) complex, which is involved in protein synthesis of a specialized repertoire of mRNAs and, together with other initiation factors, stimulates binding of mRNA and methionyl-tRNAi to the 40S ribosome. The eIF-3 complex specifically targets and initiates translation of a subset of mRNAs involved in cell proliferation. This subunit can bind 18S rRNA. The sequence is that of Eukaryotic translation initiation factor 3 subunit G from Meyerozyma guilliermondii (strain ATCC 6260 / CBS 566 / DSM 6381 / JCM 1539 / NBRC 10279 / NRRL Y-324) (Yeast).